We begin with the raw amino-acid sequence, 126 residues long: Small ribosomal subunit protein bS6 (126 aa).

The tract at residues 99–126 is disordered; that stretch reads PLPAPRVVPGTEAPEPAQAAETPEPEAS. The segment covering 107–120 has biased composition (low complexity); the sequence is PGTEAPEPAQAAET.

It belongs to the bacterial ribosomal protein bS6 family.

In terms of biological role, binds together with bS18 to 16S ribosomal RNA. This is Small ribosomal subunit protein bS6 from Synechococcus sp. (strain CC9902).